The following is a 275-amino-acid chain: Formamidopyrimidine-DNA glycosylase (275 aa).

Pro2 serves as the catalytic Schiff-base intermediate with DNA. Glu3 acts as the Proton donor in catalysis. Residue Lys59 is the Proton donor; for beta-elimination activity of the active site. The DNA site is built by His93, Arg112, and Arg153. Residues 238 to 272 form an FPG-type zinc finger; it reads NVYDRVGKPCPRCQTAIERIVVAQRSTFFCPLCQV. Residue Arg262 is the Proton donor; for delta-elimination activity of the active site.

This sequence belongs to the FPG family. In terms of assembly, monomer. It depends on Zn(2+) as a cofactor.

It carries out the reaction Hydrolysis of DNA containing ring-opened 7-methylguanine residues, releasing 2,6-diamino-4-hydroxy-5-(N-methyl)formamidopyrimidine.. It catalyses the reaction 2'-deoxyribonucleotide-(2'-deoxyribose 5'-phosphate)-2'-deoxyribonucleotide-DNA = a 3'-end 2'-deoxyribonucleotide-(2,3-dehydro-2,3-deoxyribose 5'-phosphate)-DNA + a 5'-end 5'-phospho-2'-deoxyribonucleoside-DNA + H(+). Involved in base excision repair of DNA damaged by oxidation or by mutagenic agents. Acts as a DNA glycosylase that recognizes and removes damaged bases. Has a preference for oxidized purines, such as 7,8-dihydro-8-oxoguanine (8-oxoG). Has AP (apurinic/apyrimidinic) lyase activity and introduces nicks in the DNA strand. Cleaves the DNA backbone by beta-delta elimination to generate a single-strand break at the site of the removed base with both 3'- and 5'-phosphates. In Chloroflexus aggregans (strain MD-66 / DSM 9485), this protein is Formamidopyrimidine-DNA glycosylase.